The sequence spans 357 residues: 3-isopropylmalate dehydrogenase (357 aa).

76–89 (GPQWDTIDPALRPE) contacts NAD(+). Residues Arg96, Arg106, Arg134, and Asp224 each contribute to the substrate site. Positions 224, 248, and 252 each coordinate Mg(2+). 282-294 (GSAPDIAGKGIAN) contributes to the NAD(+) binding site.

It belongs to the isocitrate and isopropylmalate dehydrogenases family. LeuB type 1 subfamily. As to quaternary structure, homodimer. Mg(2+) serves as cofactor. Mn(2+) is required as a cofactor.

It is found in the cytoplasm. It carries out the reaction (2R,3S)-3-isopropylmalate + NAD(+) = 4-methyl-2-oxopentanoate + CO2 + NADH. The protein operates within amino-acid biosynthesis; L-leucine biosynthesis; L-leucine from 3-methyl-2-oxobutanoate: step 3/4. In terms of biological role, catalyzes the oxidation of 3-carboxy-2-hydroxy-4-methylpentanoate (3-isopropylmalate) to 3-carboxy-4-methyl-2-oxopentanoate. The product decarboxylates to 4-methyl-2 oxopentanoate. This Xanthomonas axonopodis pv. citri (strain 306) protein is 3-isopropylmalate dehydrogenase.